A 597-amino-acid polypeptide reads, in one-letter code: Adenine deaminase 2 (597 aa).

It belongs to the metallo-dependent hydrolases superfamily. Adenine deaminase family. Mn(2+) is required as a cofactor.

It carries out the reaction adenine + H2O + H(+) = hypoxanthine + NH4(+). The sequence is that of Adenine deaminase 2 from Agrobacterium fabrum (strain C58 / ATCC 33970) (Agrobacterium tumefaciens (strain C58)).